Here is a 166-residue protein sequence, read N- to C-terminus: NAD(P)H-quinone oxidoreductase subunit I, chloroplastic (166 aa).

2 4Fe-4S ferredoxin-type domains span residues 55–84 (GRIH…VDWK) and 95–124 (LNYS…MTEE). Positions 64, 67, 70, 74, 104, 107, 110, and 114 each coordinate [4Fe-4S] cluster.

The protein belongs to the complex I 23 kDa subunit family. NDH is composed of at least 16 different subunits, 5 of which are encoded in the nucleus. Requires [4Fe-4S] cluster as cofactor.

The protein localises to the plastid. Its subcellular location is the chloroplast thylakoid membrane. The enzyme catalyses a plastoquinone + NADH + (n+1) H(+)(in) = a plastoquinol + NAD(+) + n H(+)(out). The catalysed reaction is a plastoquinone + NADPH + (n+1) H(+)(in) = a plastoquinol + NADP(+) + n H(+)(out). In terms of biological role, NDH shuttles electrons from NAD(P)H:plastoquinone, via FMN and iron-sulfur (Fe-S) centers, to quinones in the photosynthetic chain and possibly in a chloroplast respiratory chain. The immediate electron acceptor for the enzyme in this species is believed to be plastoquinone. Couples the redox reaction to proton translocation, and thus conserves the redox energy in a proton gradient. This is NAD(P)H-quinone oxidoreductase subunit I, chloroplastic from Oteiza scandens (Climbing oteiza).